The following is a 207-amino-acid chain: Large ribosomal subunit protein uL4 (207 aa).

The interval 49–78 (HAVKNRSAVSGGGRKPWRQKGTGRARQGSI) is disordered.

Belongs to the universal ribosomal protein uL4 family. Part of the 50S ribosomal subunit.

In terms of biological role, one of the primary rRNA binding proteins, this protein initially binds near the 5'-end of the 23S rRNA. It is important during the early stages of 50S assembly. It makes multiple contacts with different domains of the 23S rRNA in the assembled 50S subunit and ribosome. Functionally, forms part of the polypeptide exit tunnel. This is Large ribosomal subunit protein uL4 from Streptococcus pneumoniae serotype 2 (strain D39 / NCTC 7466).